A 152-amino-acid chain; its full sequence is Sec-independent protein translocase protein TatB (152 aa).

Residues 1–21 (MFDVAPSELLLVAVVALVVIG) form a helical membrane-spanning segment. The span at 60–71 (EDMEKRWAEENA) shows a compositional bias: basic and acidic residues. Residues 60 to 152 (EDMEKRWAEE…KEADQQEKQS (93 aa)) are disordered. 2 stretches are compositionally biased toward low complexity: residues 84–98 (TAST…PVSD) and 124–140 (AANH…STPA). Residues 141 to 152 (KPKEADQQEKQS) are compositionally biased toward basic and acidic residues.

The protein belongs to the TatB family. As to quaternary structure, the Tat system comprises two distinct complexes: a TatABC complex, containing multiple copies of TatA, TatB and TatC subunits, and a separate TatA complex, containing only TatA subunits. Substrates initially bind to the TatABC complex, which probably triggers association of the separate TatA complex to form the active translocon.

Its subcellular location is the cell inner membrane. Its function is as follows. Part of the twin-arginine translocation (Tat) system that transports large folded proteins containing a characteristic twin-arginine motif in their signal peptide across membranes. Together with TatC, TatB is part of a receptor directly interacting with Tat signal peptides. TatB may form an oligomeric binding site that transiently accommodates folded Tat precursor proteins before their translocation. This is Sec-independent protein translocase protein TatB from Zymomonas mobilis subsp. mobilis (strain ATCC 31821 / ZM4 / CP4).